The primary structure comprises 386 residues: Adiponectin receptor protein 2 (386 aa).

A disordered region spans residues methionine 1–aspartate 72. Topologically, residues methionine 1–glycine 147 are cytoplasmic. Over residues proline 15–arginine 31 the composition is skewed to basic and acidic residues. A compositionally biased stretch (acidic residues) spans serine 58–aspartate 72. A helical transmembrane segment spans residues asparagine 148–phenylalanine 168. Topologically, residues arginine 169 to lysine 181 are extracellular. A helical membrane pass occupies residues valine 182–histidine 202. Histidine 202 provides a ligand contact to Zn(2+). Topologically, residues threonine 203–arginine 213 are cytoplasmic. Residues leucine 214–tryptophan 234 form a helical membrane-spanning segment. The Extracellular segment spans residues leucine 235 to proline 245. Residues cysteine 246–tryptophan 266 form a helical membrane-spanning segment. The Cytoplasmic segment spans residues aspartate 267 to glutamine 273. Residues tyrosine 274 to leucine 294 form a helical membrane-spanning segment. Topologically, residues histidine 295–glycine 309 are extracellular. The helical transmembrane segment at glutamine 310–alanine 330 threads the bilayer. The Cytoplasmic segment spans residues arginine 331 to histidine 348. Positions 348 and 352 each coordinate Zn(2+). The helical transmembrane segment at glutamine 349 to leucine 369 threads the bilayer. Topologically, residues glutamine 370–leucine 386 are extracellular.

This sequence belongs to the ADIPOR family. As to quaternary structure, may form homooligomers and heterooligomers with ADIPOR1. Interacts with APPL2 (via BAR domain); ADIPOQ dissociates this interaction. In terms of tissue distribution, detected in liver and quadriceps muscle (at protein level). Highly expressed in liver. Highly expressed in white adipose tissue, and at intermediate levels in brown adipose tissue. Expressed at intermediate level in heart, kidney, lung and skeletal muscle. Weakly expressed in brain, spleen and testis.

It localises to the cell membrane. Its function is as follows. Receptor for ADIPOQ, an essential hormone secreted by adipocytes that regulates glucose and lipid metabolism. Required for normal body fat and glucose homeostasis. ADIPOQ-binding activates a signaling cascade that leads to increased PPARA activity, and ultimately to increased fatty acid oxidation and glucose uptake. Has intermediate affinity for globular and full-length adiponectin. Required for normal revascularization after chronic ischemia caused by severing of blood vessels. The protein is Adiponectin receptor protein 2 of Mus musculus (Mouse).